The primary structure comprises 139 residues: Aspartate 1-decarboxylase (139 aa).

Residue S26 is the Schiff-base intermediate with substrate; via pyruvic acid of the active site. Pyruvic acid (Ser) is present on S26. T58 is a binding site for substrate. Y59 serves as the catalytic Proton donor. 72-74 (GGA) is a substrate binding site.

This sequence belongs to the PanD family. In terms of assembly, heterooctamer of four alpha and four beta subunits. Requires pyruvate as cofactor. Is synthesized initially as an inactive proenzyme, which is activated by self-cleavage at a specific serine bond to produce a beta-subunit with a hydroxyl group at its C-terminus and an alpha-subunit with a pyruvoyl group at its N-terminus.

Its subcellular location is the cytoplasm. It catalyses the reaction L-aspartate + H(+) = beta-alanine + CO2. It functions in the pathway cofactor biosynthesis; (R)-pantothenate biosynthesis; beta-alanine from L-aspartate: step 1/1. Catalyzes the pyruvoyl-dependent decarboxylation of aspartate to produce beta-alanine. The protein is Aspartate 1-decarboxylase of Microcystis aeruginosa (strain NIES-843 / IAM M-2473).